The primary structure comprises 595 residues: UvrABC system protein C (595 aa).

The 78-residue stretch at 17 to 94 folds into the GIY-YIG domain; it reads FEPGCYLMKD…IKQYQPRYNI (78 aa). Residues 199-234 form the UVR domain; that stretch reads KTIIKNLESRMQAASENLEFEQAKEYRDLIQNIHNL.

It belongs to the UvrC family. As to quaternary structure, interacts with UvrB in an incision complex.

It is found in the cytoplasm. Functionally, the UvrABC repair system catalyzes the recognition and processing of DNA lesions. UvrC both incises the 5' and 3' sides of the lesion. The N-terminal half is responsible for the 3' incision and the C-terminal half is responsible for the 5' incision. The sequence is that of UvrABC system protein C from Staphylococcus carnosus (strain TM300).